The sequence spans 71 residues: Disintegrin tzabcanin (71 aa).

Residues 1–71 (GEECDCGSPA…ADCPRNHFHA (71 aa)) form the Disintegrin domain. Disulfide bonds link cysteine 4-cysteine 19, cysteine 6-cysteine 14, cysteine 13-cysteine 36, cysteine 27-cysteine 33, cysteine 32-cysteine 57, and cysteine 45-cysteine 64. Positions 49-51 (RGD) match the Cell attachment site motif.

This sequence belongs to the venom metalloproteinase (M12B) family. P-II subfamily. P-IIa sub-subfamily. As to expression, expressed by the venom gland.

The protein resides in the secreted. Inhibits fibrinogen interaction with platelets. Acts by binding to alpha-IIb/beta-3 (ITGA2B/ITGB3) on the platelet surface and inhibits aggregation induced by ADP, thrombin, platelet-activating factor and collagen. Inhibits cell adhesion to vitronectin, probably by blocking its receptor integrin alpha-V/beta-3 (ITGAV/ITGB3), and to fibronectin in vitro. Shows little to no cytotoxicity in vitro. This is Disintegrin tzabcanin from Crotalus tzabcan (Yucatan neotropical rattlesnake).